The sequence spans 530 residues: Phosphoenolpyruvate carboxykinase (ATP) (530 aa).

Substrate is bound by residues arginine 58, tyrosine 195, and lysine 201. ATP-binding positions include lysine 201, histidine 220, and 236-244 (GLSGTGKTT). Residues lysine 201 and histidine 220 each coordinate Mn(2+). Aspartate 257 contacts Mn(2+). ATP is bound by residues glutamate 285, arginine 321, 440-441 (RI), and threonine 446. Position 321 (arginine 321) interacts with substrate.

Belongs to the phosphoenolpyruvate carboxykinase (ATP) family. Requires Mn(2+) as cofactor.

It localises to the cytoplasm. The enzyme catalyses oxaloacetate + ATP = phosphoenolpyruvate + ADP + CO2. It participates in carbohydrate biosynthesis; gluconeogenesis. In terms of biological role, involved in the gluconeogenesis. Catalyzes the conversion of oxaloacetate (OAA) to phosphoenolpyruvate (PEP) through direct phosphoryl transfer between the nucleoside triphosphate and OAA. This is Phosphoenolpyruvate carboxykinase (ATP) from Staphylococcus epidermidis (strain ATCC 12228 / FDA PCI 1200).